We begin with the raw amino-acid sequence, 208 residues long: Pyridoxine/pyridoxamine 5'-phosphate oxidase (208 aa).

FMN is bound by residues 53-58 (RTVLLK), 68-69 (YS), Lys-75, and Gln-100. Lys-58 is a substrate binding site. Substrate contacts are provided by Tyr-118, Arg-122, and Ser-126. Residues 135 to 136 (QS) and Trp-180 each bind FMN. A substrate-binding site is contributed by 186 to 188 (RLH). Arg-190 serves as a coordination point for FMN.

It belongs to the pyridoxamine 5'-phosphate oxidase family. Homodimer. The cofactor is FMN.

It catalyses the reaction pyridoxamine 5'-phosphate + O2 + H2O = pyridoxal 5'-phosphate + H2O2 + NH4(+). It carries out the reaction pyridoxine 5'-phosphate + O2 = pyridoxal 5'-phosphate + H2O2. The protein operates within cofactor metabolism; pyridoxal 5'-phosphate salvage; pyridoxal 5'-phosphate from pyridoxamine 5'-phosphate: step 1/1. It functions in the pathway cofactor metabolism; pyridoxal 5'-phosphate salvage; pyridoxal 5'-phosphate from pyridoxine 5'-phosphate: step 1/1. Functionally, catalyzes the oxidation of either pyridoxine 5'-phosphate (PNP) or pyridoxamine 5'-phosphate (PMP) into pyridoxal 5'-phosphate (PLP). The polypeptide is Pyridoxine/pyridoxamine 5'-phosphate oxidase (Xylella fastidiosa (strain 9a5c)).